Here is a 244-residue protein sequence, read N- to C-terminus: Nodulation protein G (244 aa).

11–35 provides a ligand contact to NAD(+); the sequence is VTGASGAIGGAIARVLHAQGAIVGL. Substrate is bound at residue Ser-139. The active-site Proton acceptor is Tyr-152.

It belongs to the short-chain dehydrogenases/reductases (SDR) family.

Proposed to modify Nod factor fatty acyl chain. This Rhizobium meliloti (Ensifer meliloti) protein is Nodulation protein G (nodG).